Consider the following 136-residue polypeptide: Holo-[acyl-carrier-protein] synthase (136 aa).

Mg(2+) contacts are provided by aspartate 7 and glutamate 53.

It belongs to the P-Pant transferase superfamily. AcpS family. Requires Mg(2+) as cofactor.

It localises to the cytoplasm. It catalyses the reaction apo-[ACP] + CoA = holo-[ACP] + adenosine 3',5'-bisphosphate + H(+). In terms of biological role, transfers the 4'-phosphopantetheine moiety from coenzyme A to a Ser of acyl-carrier-protein. This is Holo-[acyl-carrier-protein] synthase from Roseiflexus castenholzii (strain DSM 13941 / HLO8).